A 413-amino-acid chain; its full sequence is Interferon-inducible GTPase 1 (413 aa).

Residue G2 is the site of N-myristoyl glycine attachment. The 183-residue stretch at 68 to 250 folds into the IRG-type G domain; sequence SVLNVAVTGE…PVLMDKLISD (183 aa). Positions 79, 81, 82, 83, 84, 102, and 103 each coordinate GDP. T102 carries the post-translational modification (Microbial infection) Phosphothreonine; by ROP18. T108 is modified ((Microbial infection) Phosphothreonine; by ROP18). GDP is bound by residues K184, D186, S187, and N232. C236 and C410 are disulfide-bonded.

Belongs to the TRAFAC class dynamin-like GTPase superfamily. IRG family. Monomer, as apoenzyme and in the GDP-bound form. Homooligomer, upon GTP binding. Interacts with HOOK3. As to quaternary structure, (Microbial infection) Interacts with Toxoplasma gondii GRA7 in GTP-dependent manner; the interaction results in faster turnover of the GTP-activated IIGP1 oligomer. Interacts with T.gondii ROP5; the interaction results in inhibition of IRGA6/IIGP1 GTPase activity and oligomerization. In terms of processing, myristoylated. Post-translationally, (Microbial infection) Phosphorylated by Toxoplasma gondii ROP18 from virulent strains.

The protein localises to the cytoplasm. It localises to the nucleus membrane. The protein resides in the endoplasmic reticulum membrane. Its subcellular location is the golgi apparatus. It is found in the golgi stack membrane. The protein localises to the parasitophorous vacuole membrane. The enzyme catalyses GTP + H2O = GDP + phosphate + H(+). Functionally, GTPase with low activity. Has higher affinity for GDP than for GTP. Plays a role in resistance to intracellular pathogens. During infection with avirulent Toxoplasma gondii strains, recruited to the parasitophorous vacuole membrane. Required for disruption of the parasitophorous vacuole formed following T.gondii infection and subsequent killing of the parasite. Mediates resistance to Chlamydia trachomatis infection by targeting bacterial inclusions to autophagosomes for subsequent lysosomal destruction. The sequence is that of Interferon-inducible GTPase 1 (Iigp1) from Mus musculus (Mouse).